The sequence spans 82 residues: Diphthamide biosynthesis protein 3 (82 aa).

A DPH-type MB domain is found at 8 to 64; it reads IYDEVEIEDMTYDPALQTYSYPCPCGDKFEIALADLQDGQDIAVCPSCSLMVRVIFE. The Fe cation site is built by Cys-30, Cys-32, Cys-52, and Cys-55.

Belongs to the DPH3 family. Component of the 2-(3-amino-3-carboxypropyl)histidine synthase complex composed of dph-1, dph-2, dph-3 and a NADH-dependent reductase, predominantly cbr-1. Requires Fe(2+) as cofactor.

It is found in the cytoplasm. It localises to the nucleus. The enzyme catalyses [3Fe-4S](1+)-[protein] + Fe(2+)-[Dph3] = [3Fe-4S](0)-[protein] + Fe(3+)-[Dph3]. The catalysed reaction is 2 [3Fe-4S](0)-[protein] + 2 Fe(2+)-[Dph3] + NADH = 2 [4Fe-4S](1+)-[protein] + 2 [Dph3] + NAD(+) + H(+). It functions in the pathway protein modification; peptidyl-diphthamide biosynthesis. Required for the first step of diphthamide biosynthesis, a post-translational modification of histidine which occurs in elongation factor 2. Dph-1 and dph-2 transfer a 3-amino-3-carboxypropyl (ACP) group from S-adenosyl-L-methionine (SAM) to a histidine residue, the reaction is assisted by a reduction system comprising dph-3 and a NADH-dependent reductase, predominantly cbr-1. Acts as an electron donor to reduce the Fe-S cluster in dph1-dph2 keeping the [4Fe-4S] clusters in the active and reduced state. Restores iron to dph-1-dph-2 iron-sulfur clusters which have degraded from [4Fe-4S] to [3Fe-4S] by donating an iron atom to reform [4Fe-4S] clusters, in a manner dependent on the presence of elongation factor 2 and SAM. Associates with the elongator complex and is required for tRNA Wobble base modifications mediated by the elongator complex. The elongator complex is required for multiple tRNA modifications, including mcm5U (5-methoxycarbonylmethyl uridine), mcm5s 2U (5-methoxycarbonylmethyl-2-thiouridine), and ncm5U (5-carbamoylmethyl uridine). The protein is Diphthamide biosynthesis protein 3 (dph-3) of Neurospora crassa (strain ATCC 24698 / 74-OR23-1A / CBS 708.71 / DSM 1257 / FGSC 987).